Reading from the N-terminus, the 190-residue chain is Ribosome hibernation promotion factor (190 aa).

The protein belongs to the HPF/YfiA ribosome-associated protein family. Long HPF subfamily. As to quaternary structure, interacts with 100S ribosomes.

It localises to the cytoplasm. Its function is as follows. Required for dimerization of active 70S ribosomes into 100S ribosomes in stationary phase; 100S ribosomes are translationally inactive and sometimes present during exponential growth. The chain is Ribosome hibernation promotion factor from Staphylococcus aureus (strain COL).